The primary structure comprises 366 residues: Polyamine aminopropyltransferase 2 (366 aa).

The span at 20–58 (KDKRSELDSDKFELEQQDKHDIQDKQDKQDEQNKQDKQV) shows a compositional bias: basic and acidic residues. Residues 20–61 (KDKRSELDSDKFELEQQDKHDIQDKQDKQDEQNKQDKQVQSE) are disordered. One can recognise a PABS domain in the interval 74-305 (DVWDEISLKE…TDWGFHLATN (232 aa)). Gln100 contacts S-methyl-5'-thioadenosine. Spermidine contacts are provided by His129 and Asp153. S-methyl-5'-thioadenosine is bound by residues Asp173 and 207–208 (DA). Residue Asp225 is the Proton acceptor of the active site.

The protein belongs to the spermidine/spermine synthase family. As to quaternary structure, homodimer or homotetramer.

The protein localises to the cytoplasm. The enzyme catalyses S-adenosyl 3-(methylsulfanyl)propylamine + putrescine = S-methyl-5'-thioadenosine + spermidine + H(+). It functions in the pathway amine and polyamine biosynthesis; spermidine biosynthesis; spermidine from putrescine: step 1/1. In terms of biological role, catalyzes the irreversible transfer of a propylamine group from the amino donor S-adenosylmethioninamine (decarboxy-AdoMet) to putrescine (1,4-diaminobutane) to yield spermidine. The chain is Polyamine aminopropyltransferase 2 from Bacillus cereus (strain ATCC 14579 / DSM 31 / CCUG 7414 / JCM 2152 / NBRC 15305 / NCIMB 9373 / NCTC 2599 / NRRL B-3711).